Here is a 79-residue protein sequence, read N- to C-terminus: Small ribosomal subunit protein uS17 (79 aa).

This sequence belongs to the universal ribosomal protein uS17 family. In terms of assembly, part of the 30S ribosomal subunit.

In terms of biological role, one of the primary rRNA binding proteins, it binds specifically to the 5'-end of 16S ribosomal RNA. The sequence is that of Small ribosomal subunit protein uS17 from Roseobacter denitrificans (strain ATCC 33942 / OCh 114) (Erythrobacter sp. (strain OCh 114)).